Here is a 308-residue protein sequence, read N- to C-terminus: Olfactory receptor 6F1 (308 aa).

The Extracellular segment spans residues Met-1 to Leu-25. Asn-5 is a glycosylation site (N-linked (GlcNAc...) asparagine). Residues Ser-26–Leu-46 traverse the membrane as a helical segment. Residues Met-47–Gln-54 are Cytoplasmic-facing. The helical transmembrane segment at Leu-55–Thr-75 threads the bilayer. Residues Ala-76–Leu-99 are Extracellular-facing. Cys-97 and Cys-189 are joined by a disulfide. Residues Gln-100–Tyr-120 form a helical membrane-spanning segment. Residues Asp-121 to Leu-139 lie on the Cytoplasmic side of the membrane. Residues Leu-140–Thr-160 traverse the membrane as a helical segment. Residues Ala-161–Leu-197 are Extracellular-facing. Residues Val-198–Ser-217 form a helical membrane-spanning segment. At Tyr-218 to Ala-237 the chain is on the cytoplasmic side. A helical membrane pass occupies residues Phe-238–Leu-258. The Extracellular segment spans residues His-259 to Ile-271. Residues Lys-272–Leu-292 traverse the membrane as a helical segment. Over Arg-293–Lys-308 the chain is Cytoplasmic.

Belongs to the G-protein coupled receptor 1 family.

Its subcellular location is the cell membrane. In terms of biological role, odorant receptor. The chain is Olfactory receptor 6F1 (OR6F1) from Homo sapiens (Human).